We begin with the raw amino-acid sequence, 65 residues long: Small ribosomal subunit protein eS27 (65 aa).

Residues Cys20, Cys23, Cys39, and Cys42 each contribute to the Zn(2+) site. The C4-type zinc-finger motif lies at 20-42; sequence CIDCGNEQIVFSHPATKVRCLVC.

It belongs to the eukaryotic ribosomal protein eS27 family. As to quaternary structure, part of the 30S ribosomal subunit. It depends on Zn(2+) as a cofactor.

This Thermococcus gammatolerans (strain DSM 15229 / JCM 11827 / EJ3) protein is Small ribosomal subunit protein eS27.